The primary structure comprises 380 residues: Cytochrome b (380 aa).

4 consecutive transmembrane segments (helical) span residues 33–53 (FGSL…FLAM), 77–98 (WLIR…YMHI), 113–133 (WNIG…GYVL), and 178–198 (FFAF…IHLL). Heme b contacts are provided by histidine 83 and histidine 97. Heme b contacts are provided by histidine 182 and histidine 196. Position 201 (histidine 201) interacts with a ubiquinone. A run of 4 helical transmembrane segments spans residues 226–246 (YKDL…ALFS), 288–308 (LGGV…PLLH), 320–340 (ITQF…WIGG), and 347–367 (FIII…VLFP).

It belongs to the cytochrome b family. The cytochrome bc1 complex contains 3 respiratory subunits (MT-CYB, CYC1 and UQCRFS1), 2 core proteins (UQCRC1 and UQCRC2) and probably 6 low-molecular weight proteins. It depends on heme b as a cofactor.

Its subcellular location is the mitochondrion inner membrane. Its function is as follows. Component of the ubiquinol-cytochrome c reductase complex (complex III or cytochrome b-c1 complex) that is part of the mitochondrial respiratory chain. The b-c1 complex mediates electron transfer from ubiquinol to cytochrome c. Contributes to the generation of a proton gradient across the mitochondrial membrane that is then used for ATP synthesis. This Carassius auratus (Goldfish) protein is Cytochrome b (mt-cyb).